Here is a 327-residue protein sequence, read N- to C-terminus: GDP-mannose transporter (327 aa).

Topologically, residues 1 to 4 (MESS) are cytoplasmic. Residues 5–25 (LAAIANSGPISIFSYCVSSIL) traverse the membrane as a helical segment. The Lumenal segment spans residues 26 to 36 (MTVTNKYVLSG). The helical transmembrane segment at 37-57 (FSFNMNFLLLAVQSIVCIVTI) threads the bilayer. The Cytoplasmic segment spans residues 58 to 78 (GSLKSFGVITYRQFNKEEARK). A helical membrane pass occupies residues 79 to 93 (WSPIAVLLVIMIYTS). The Lumenal segment spans residues 94-102 (SKALQYLSI). The chain crosses the membrane as a helical span at residues 103-125 (PVYTIFKNLTIILIAYGEVLWFG). The Cytoplasmic portion of the chain corresponds to 126-131 (GKVTTM). Residues 132 to 149 (ALSSFLLMVFSSVVAWYG) traverse the membrane as a helical segment. Residues 150 to 163 (DEAVSGSGNESFIA) are Lumenal-facing. An N-linked (GlcNAc...) asparagine glycan is attached at N158. The helical transmembrane segment at 164–184 (LYLGYFWMATNCFASAAFVLI) threads the bilayer. Residues 185–207 (MRKRIKLTNFKDFDTMYYNNLLS) lie on the Cytoplasmic side of the membrane. Residues 208–228 (IPILLASSIIFEDWSAENLAV) traverse the membrane as a helical segment. Residues 229-238 (NFPSDNRTAT) are Lumenal-facing. N-linked (GlcNAc...) asparagine glycosylation is present at N234. The helical transmembrane segment at 239-259 (IAAMVLSGASSVGISYCSAWC) threads the bilayer. Over 260–266 (VRVTSST) the chain is Cytoplasmic. A helical transmembrane segment spans residues 267-289 (TYSMVGALNKLPIALSGLVFFPA). Residues 290–292 (AVN) are Lumenal-facing. The helical transmembrane segment at 293 to 312 (FWSVASIFVGFAAGLVYAVA) threads the bilayer. The Cytoplasmic segment spans residues 313–327 (KQRQQKENVSLPSSK).

It belongs to the TPT transporter family. SLC35D subfamily. As to quaternary structure, homooligomer.

Its subcellular location is the golgi apparatus membrane. It localises to the cytoplasmic vesicle membrane. The protein resides in the endoplasmic reticulum membrane. Its function is as follows. Involved in the import of GDP-mannose from the cytoplasm into the Golgi lumen. This chain is GDP-mannose transporter (VRG4), found in Scheffersomyces stipitis (strain ATCC 58785 / CBS 6054 / NBRC 10063 / NRRL Y-11545) (Yeast).